Consider the following 88-residue polypeptide: Protein transport protein SBH2 (88 aa).

The disordered stretch occupies residues 1-42; sequence MAASVPPGGQRILQKRRQAQSIKEKQAKQTPTSTRQAGYGGS. Over 1–61 the chain is Cytoplasmic; sequence MAASVPPGGQ…DEANGFRVDS (61 aa). Residues 28–42 show a composition bias toward polar residues; it reads KQTPTSTRQAGYGGS. The chain crosses the membrane as a helical span at residues 62–82; it reads LVVLFLSVGFIFSVIALHLLT.

This sequence belongs to the SEC61-beta family. As to quaternary structure, component of the heterotrimeric Ssh1 complex, which is composed of SSH1, SBH2 and SSS1.

The protein resides in the endoplasmic reticulum membrane. Part of the Ssh1 complex, which probably is the major component of a channel-forming translocon complex that may function exclusively in the cotranslational pathway of protein endoplasmic reticulum (ER) import. The sequence is that of Protein transport protein SBH2 (SBH2) from Saccharomyces cerevisiae (strain ATCC 204508 / S288c) (Baker's yeast).